The chain runs to 262 residues: Ribose-5-phosphate isomerase A (262 aa).

Substrate contacts are provided by residues 33-36 (TGST), 89-92 (DGAD), and 102-105 (KGGG). Glutamate 111 (proton acceptor) is an active-site residue. A substrate-binding site is contributed by lysine 129.

The protein belongs to the ribose 5-phosphate isomerase family. As to quaternary structure, homodimer.

The catalysed reaction is aldehydo-D-ribose 5-phosphate = D-ribulose 5-phosphate. The protein operates within carbohydrate degradation; pentose phosphate pathway; D-ribose 5-phosphate from D-ribulose 5-phosphate (non-oxidative stage): step 1/1. In terms of biological role, catalyzes the reversible conversion of ribose-5-phosphate to ribulose 5-phosphate. The polypeptide is Ribose-5-phosphate isomerase A (Cereibacter sphaeroides (strain ATCC 17023 / DSM 158 / JCM 6121 / CCUG 31486 / LMG 2827 / NBRC 12203 / NCIMB 8253 / ATH 2.4.1.) (Rhodobacter sphaeroides)).